We begin with the raw amino-acid sequence, 356 residues long: Heat-inducible transcription repressor HrcA (356 aa).

This sequence belongs to the HrcA family.

In terms of biological role, negative regulator of class I heat shock genes (grpE-dnaK-dnaJ and groELS operons). Prevents heat-shock induction of these operons. The polypeptide is Heat-inducible transcription repressor HrcA (Chelativorans sp. (strain BNC1)).